The following is a 335-amino-acid chain: 2-acylglycerol O-acyltransferase 1 (335 aa).

The next 2 helical transmembrane spans lie at 24–44 and 104–124; these read WLLSFLLFAQVCLGIIVFLII and YIFGFHPHGVLVVGAFGNFCT. Residues Asn-125 and Asn-180 are each glycosylated (N-linked (GlcNAc...) asparagine).

Belongs to the diacylglycerol acyltransferase family.

It is found in the endoplasmic reticulum membrane. It carries out the reaction a 2-acylglycerol + an acyl-CoA = a 1,2-diacylglycerol + CoA. It catalyses the reaction 2-(9Z-octadecenoyl)-glycerol + butanoyl-CoA = 1-butanoyl-2-(9Z-octadecenoyl)-glycerol + CoA. The catalysed reaction is 2-(9Z-octadecenoyl)-glycerol + octanoyl-CoA = 1-octanoyl-2-(9Z-octadecenoyl)-glycerol + CoA. The enzyme catalyses 2-(9Z-octadecenoyl)-glycerol + dodecanoyl-CoA = 1-dodecanoyl-2-(9Z-octadecenoyl)-glycerol + CoA. It carries out the reaction 2-(9Z-octadecenoyl)-glycerol + tetradecanoyl-CoA = 1-tetradecanoyl-2-(9Z-octadecenoyl)-glycerol + CoA. It catalyses the reaction 2-(9Z-octadecenoyl)-glycerol + hexadecanoyl-CoA = 1-hexadecanoyl-2-(9Z-octadecenoyl)-glycerol + CoA. The catalysed reaction is 2-(9Z-octadecenoyl)-glycerol + octadecanoyl-CoA = 1-octadecanoyl-2-(9Z-octadecenoyl)-glycerol + CoA. The enzyme catalyses eicosanoyl-CoA + 2-(9Z-octadecenoyl)-glycerol = 1-eicosanoyl-2-(9Z-octadecenoyl)-glycerol + CoA. It carries out the reaction 2-(9Z-octadecenoyl)-glycerol + (9Z)-octadecenoyl-CoA = 1,2-di-(9Z-octadecenoyl)-glycerol + CoA. It catalyses the reaction 2-(9Z-octadecenoyl)-glycerol + (9Z,12Z)-octadecadienoyl-CoA = 1-(9Z,12Z-octadecadienoyl)-2-(9Z-octadecenoyl)-glycerol + CoA. The catalysed reaction is 2-(9Z-octadecenoyl)-glycerol + (5Z,8Z,11Z,14Z)-eicosatetraenoyl-CoA = 1-(5Z,8Z,11Z,14Z-eicosatetraenoyl)-2-(9Z-octadecenoyl)-glycerol + CoA. The enzyme catalyses a 2-acylglycerol + an acyl-CoA = a 1,2-diacyl-sn-glycerol + CoA. It carries out the reaction a 2-acylglycerol + an acyl-CoA = a 2,3-diacyl-sn-glycerol + CoA. It catalyses the reaction a 1-acylglycerol + an acyl-CoA = a 1,2-diacylglycerol + CoA. The catalysed reaction is 1-dodecanoylglycerol + (9Z)-octadecenoyl-CoA = 1-dodecanoyl-2-(9Z-octadecenoyl)-glycerol + CoA. The enzyme catalyses 1-tetradecanoylglycerol + (9Z)-octadecenoyl-CoA = 1-tetradecanoyl-2-(9Z-octadecenoyl)-glycerol + CoA. It carries out the reaction 1-hexadecanoylglycerol + (9Z)-octadecenoyl-CoA = 1-hexadecanoyl-2-(9Z-octadecenoyl)-glycerol + CoA. It catalyses the reaction 1-(9Z-octadecenoyl)-glycerol + (9Z)-octadecenoyl-CoA = 1,2-di-(9Z-octadecenoyl)-glycerol + CoA. The catalysed reaction is 1-(9Z,12Z-octadecadienoyl)-glycerol + (9Z)-octadecenoyl-CoA = 1-(9Z,12Z-octadecadienoyl)-2-(9Z-octadecenoyl)-glycerol + CoA. The enzyme catalyses 1-(9Z,12Z,15Z-octadecatrienoyl)-glycerol + (9Z)-octadecenoyl-CoA = 1-(9Z,12Z,15Z-octadecatrienoyl)-2-(9Z-octadecenoyl)-glycerol + CoA. It carries out the reaction 1-(5Z,8Z,11Z,14Z-eicosatetraenoyl)-glycerol + (9Z)-octadecenoyl-CoA = 1-(5Z,8Z,11Z,14Z-eicosatetraenoyl)-2-(9Z-octadecenoyl)-glycerol + CoA. It catalyses the reaction a 1-acylglycerol + an acyl-CoA = a 1,3-diacylglycerol + CoA. The catalysed reaction is 1-dodecanoylglycerol + (9Z)-octadecenoyl-CoA = 1-dodecanoyl-3-(9Z-octadecenoyl)-glycerol + CoA. The enzyme catalyses 1-hexadecanoylglycerol + (9Z)-octadecenoyl-CoA = 1-(9Z-octadecenoyl)-3-hexadecanoylglycerol + CoA. It carries out the reaction 1-octadecanoylglycerol + (9Z)-octadecenoyl-CoA = 1-octadecanoyl-3-(9Z-octadecenoyl)-glycerol + CoA. It catalyses the reaction 1-(9Z-octadecenoyl)-sn-glycerol + (9Z)-octadecenoyl-CoA = 1,3-di-(9Z-octadecenoyl)-glycerol + CoA. The catalysed reaction is 1-(9Z,12Z-octadecadienoyl)-glycerol + (9Z)-octadecenoyl-CoA = 1-(9Z-octadecenoyl)-3-(9Z,12Z-octadecadienoyl)-glycerol + CoA. The enzyme catalyses 1-(9Z,12Z,15Z-octadecatrienoyl)-glycerol + (9Z)-octadecenoyl-CoA = 1-(9Z,12Z,15Z-octadecatrienoyl)-3-(9Z-octadecenoyl)-glycerol + CoA. It carries out the reaction a 1-acyl-sn-glycerol + an acyl-CoA = a 1,3-diacyl-sn-glycerol + CoA. It catalyses the reaction a 3-acyl-sn-glycerol + an acyl-CoA = a 1,3-diacyl-sn-glycerol + CoA. The catalysed reaction is 3-octadecanoyl-sn-glycerol + (9Z)-octadecenoyl-CoA = 1-(9Z-octadecenoyl)-3-octadecanoyl-sn-glycerol + CoA. The protein operates within glycerolipid metabolism; triacylglycerol biosynthesis. Involved in glycerolipid synthesis and lipid metabolism. Catalyzes the formation of diacylglycerol, the precursor of triacylglycerol, by transferring the acyl chain of a fatty acyl-CoA to a monoacylglycerol, mainly at the sn-1 or sn-3 positions. It uses both sn-2-monoacylglycerol (2-acylglycerol) and sn-1-monoacylglycerol (1-acyl-sn-glycerol) equally well as substrates, and uses sn-3-monoacylglycerol (3-acyl-sn-glycerol) with lower efficiency. Probably not involved in absorption of dietary fat in the small intestine. In Bos taurus (Bovine), this protein is 2-acylglycerol O-acyltransferase 1 (MOGAT1).